Reading from the N-terminus, the 56-residue chain is Large ribosomal subunit protein bL32 (56 aa).

Over residues 1 to 20 (MAVPKRRTSRSNTRSRRSQW) the composition is skewed to basic residues. The tract at residues 1-24 (MAVPKRRTSRSNTRSRRSQWKAKV) is disordered.

The protein belongs to the bacterial ribosomal protein bL32 family.

The sequence is that of Large ribosomal subunit protein bL32 from Frankia casuarinae (strain DSM 45818 / CECT 9043 / HFP020203 / CcI3).